Consider the following 251-residue polypeptide: 5'-nucleotidase SurE (251 aa).

A divalent metal cation contacts are provided by aspartate 8, aspartate 9, serine 40, and asparagine 95.

Belongs to the SurE nucleotidase family. A divalent metal cation is required as a cofactor.

Its subcellular location is the cytoplasm. It catalyses the reaction a ribonucleoside 5'-phosphate + H2O = a ribonucleoside + phosphate. In terms of biological role, nucleotidase that shows phosphatase activity on nucleoside 5'-monophosphates. The protein is 5'-nucleotidase SurE of Lawsonia intracellularis (strain PHE/MN1-00).